Here is a 424-residue protein sequence, read N- to C-terminus: UPF0229 protein Ping_2705 (424 aa).

Residues 77-108 (PGNQDFIGGDRIERPPSGGAGGSGSGASDSGK) form a disordered region.

Belongs to the UPF0229 family.

In Psychromonas ingrahamii (strain DSM 17664 / CCUG 51855 / 37), this protein is UPF0229 protein Ping_2705.